Reading from the N-terminus, the 23-residue chain is Conotoxin Cl6c (23 aa).

Intrachain disulfides connect cysteine 2-cysteine 12, cysteine 5-cysteine 17, and cysteine 11-cysteine 21.

Expressed by the venom duct.

The protein localises to the secreted. The protein is Conotoxin Cl6c of Californiconus californicus (California cone).